Here is a 1136-residue protein sequence, read N- to C-terminus: Collagen alpha-1(XIX) chain (1136 aa).

The N-terminal stretch at 1 to 23 (MRHTGSWKLWTWVTTFLLPACTC) is a signal peptide. Asn47 carries an N-linked (GlcNAc...) asparagine glycan. Positions 47 to 231 (NKSELSGFDL…LHQLRIYCNA (185 aa)) constitute a Laminin G-like domain. Disordered stretches follow at residues 252–272 (DFGSTTSSWGTSNTGKMSSYL), 289–673 (EEAG…PGDP), 699–1005 (GLKS…TPAD), and 1043–1136 (SAQA…AGGK). Over residues 254–266 (GSTTSSWGTSNTG) the composition is skewed to low complexity. Positions 289-348 (EEAGLPGTLRSIGHKGDKGEPGEHGLDGTPGLPGQKGEQGLEGIKGEIGEKGEPGAKGDS) are triple-helical region 1 (COL1). Collagen-like domains lie at 292 to 346 (GLPG…GAKG), 347 to 388 (DSGL…ALTG), and 389 to 430 (SIGI…GLQG). Basic and acidic residues-rich tracts occupy residues 302-314 (HKGDKGEPGEHGL) and 332-344 (IKGEIGEKGEPGA). The tract at residues 367-426 (GPPGPKGDKGDMGPPGPPALTGSIGIQGPQGPPGKEGQRGRRGKTGPPGNPGPPGPPGPP) is triple-helical region 2 (COL2). Positions 387–401 (TGSIGIQGPQGPPGK) are enriched in low complexity. Pro residues predominate over residues 414 to 426 (PGNPGPPGPPGPP). Residues 428–437 (LQGLQQPFGG) are compositionally biased toward low complexity. The triple-helical region 3 (COL3) stretch occupies residues 442–682 (GTGEHGASGP…PIALPLLGDI (241 aa)). Residues 472–490 (HKGEPGEPLTKGEKGDRGE) are compositionally biased toward basic and acidic residues. Low complexity-rich tracts occupy residues 511–523 (LLGSPGLKGQQGP) and 567–577 (PGLKGDAGPPG). Collagen-like domains are found at residues 519 to 577 (GQQG…GPPG), 578 to 618 (ISLP…GPPG), 620 to 673 (GIPG…PGDP), 722 to 777 (KGDV…GPPG), 778 to 810 (LTGRTGHPGPTGAKGDKGSEGPPGKPGPPGPPG), and 833 to 891 (GYPG…APGP). Residues 634–645 (PGIQGPRGLPGL) are compositionally biased toward low complexity. The segment at 694–812 (QANVPGLKSI…PGPPGPPGVP (119 aa)) is triple-helical region 4 (COL4). 2 stretches are compositionally biased toward basic and acidic residues: residues 714 to 725 (GKYDPAARKGDV) and 737 to 758 (EGPKGSKGERGYPGIHGEKGDE). Residues 764–788 (PGLSGAPGPTGPPGLTGRTGHPGPT) show a composition bias toward low complexity. Composition is skewed to pro residues over residues 800-811 (PGKPGPPGPPGV) and 834-846 (YPGPPGPPGPKGD). Residues 827 to 1006 (GGVNVPGYPG…PGIPGTPADA (180 aa)) form a triple-helical region 5 (COL5) region. Low complexity predominate over residues 877–886 (PGIAGISGKP). The span at 937-948 (PGDRGPKGERGD) shows a compositional bias: basic and acidic residues. A Cell attachment site motif is present at residues 946–948 (RGD). Residues 1048-1105 (GRPGPPGKDGLPGPPGDPGPQGYRGQKGERGEPGIGLPGSPGLPGSSAVGLPGSPGAP) form a triple-helical region 6 (COL6) region. Low complexity predominate over residues 1087–1101 (SPGLPGSSAVGLPGS). The segment covering 1102 to 1113 (PGAPGPQGPPGP) has biased composition (pro residues).

It belongs to the fibril-associated collagens with interrupted helices (FACIT) family. As to quaternary structure, oligomer; disulfide-linked. In terms of processing, prolines at the third position of the tripeptide repeating unit (G-X-Y) are hydroxylated in some or all of the chains.

The protein localises to the secreted. Its subcellular location is the extracellular space. The protein resides in the extracellular matrix. In terms of biological role, may act as a cross-bridge between fibrils and other extracellular matrix molecules. Involved in skeletal myogenesis in the developing esophagus. May play a role in organization of the pericellular matrix or the sphinteric smooth muscle. The polypeptide is Collagen alpha-1(XIX) chain (Mus musculus (Mouse)).